The following is a 132-amino-acid chain: Small ribosomal subunit protein uS8 (132 aa).

Belongs to the universal ribosomal protein uS8 family. In terms of assembly, part of the 30S ribosomal subunit. Contacts proteins S5 and S12.

Its function is as follows. One of the primary rRNA binding proteins, it binds directly to 16S rRNA central domain where it helps coordinate assembly of the platform of the 30S subunit. This chain is Small ribosomal subunit protein uS8, found in Natranaerobius thermophilus (strain ATCC BAA-1301 / DSM 18059 / JW/NM-WN-LF).